The following is a 638-amino-acid chain: Nucleolar protein 4 (638 aa).

Disordered regions lie at residues 210 to 312, 343 to 403, 503 to 535, and 573 to 603; these read QQDE…SPLS, EREA…TDGV, NAAK…TYST, and SSGP…QLSP. A compositionally biased stretch (acidic residues) spans 211–225; sequence QDEDESSIESDEFDM. 4 stretches are compositionally biased toward polar residues: residues 229 to 254, 263 to 281, 302 to 312, and 351 to 363; these read TRMS…NLHG, ESFN…SGGT, QPLNLSDSPLS, and SKSP…SYDS. Basic and acidic residues-rich tracts occupy residues 364–374, 391–403, and 503–515; these read GKNESVDRGAE, HDDS…TDGV, and NAAK…RQQD. Residues 588-597 are compositionally biased toward low complexity; that stretch reads SSGSSSSSNS.

Expressed predominantly in fetal brain, adult brain and testis.

It is found in the nucleus. The protein localises to the nucleolus. In Homo sapiens (Human), this protein is Nucleolar protein 4 (NOL4).